Consider the following 456-residue polypeptide: GTPase Der (456 aa).

EngA-type G domains lie at 3–167 (FTIA…PPSD) and 185–360 (IRVA…AVWN). GTP-binding positions include 9–16 (GRPNVGKS), 56–60 (DTAGL), and 119–122 (NKSE). The tract at residues 162-181 (IVPPSDDEDDEREETDEERA) is disordered. The span at 166–178 (SDDEDDEREETDE) shows a compositional bias: acidic residues. Residues 191–198 (GRPNAGKS), 238–242 (DTAGL), and 303–306 (NKWD) contribute to the GTP site. The 85-residue stretch at 361 to 445 (RRVPTAALNR…PVRITLREKA (85 aa)) folds into the KH-like domain.

The protein belongs to the TRAFAC class TrmE-Era-EngA-EngB-Septin-like GTPase superfamily. EngA (Der) GTPase family. In terms of assembly, associates with the 50S ribosomal subunit.

Functionally, GTPase that plays an essential role in the late steps of ribosome biogenesis. The sequence is that of GTPase Der from Bradyrhizobium sp. (strain ORS 278).